The following is an 87-amino-acid chain: UPF0335 protein Meso_3367 (87 aa).

Belongs to the UPF0335 family.

In Chelativorans sp. (strain BNC1), this protein is UPF0335 protein Meso_3367.